The following is a 156-amino-acid chain: ATP synthase subunit b', chloroplastic (156 aa).

A helical membrane pass occupies residues 20 to 42; it reads NGTLPLMALQFLTLMVLLNTIFY.

It belongs to the ATPase B chain family. F-type ATPases have 2 components, F(1) - the catalytic core - and F(0) - the membrane proton channel. F(1) has five subunits: alpha(3), beta(3), gamma(1), delta(1), epsilon(1). F(0) has four main subunits: a(1), b(1), b'(1) and c(10-14). The alpha and beta chains form an alternating ring which encloses part of the gamma chain. F(1) is attached to F(0) by a central stalk formed by the gamma and epsilon chains, while a peripheral stalk is formed by the delta, b and b' chains.

Its subcellular location is the plastid. It is found in the chloroplast thylakoid membrane. Its function is as follows. F(1)F(0) ATP synthase produces ATP from ADP in the presence of a proton or sodium gradient. F-type ATPases consist of two structural domains, F(1) containing the extramembraneous catalytic core and F(0) containing the membrane proton channel, linked together by a central stalk and a peripheral stalk. During catalysis, ATP synthesis in the catalytic domain of F(1) is coupled via a rotary mechanism of the central stalk subunits to proton translocation. Component of the F(0) channel, it forms part of the peripheral stalk, linking F(1) to F(0). The b'-subunit is a diverged and duplicated form of b found in plants and photosynthetic bacteria. The protein is ATP synthase subunit b', chloroplastic of Pyropia yezoensis (Susabi-nori).